We begin with the raw amino-acid sequence, 291 residues long: Nucleotide-binding protein Cthe_0113 (291 aa).

Residue 8-15 (GISGAGKS) coordinates ATP. A GTP-binding site is contributed by 59–62 (DIRG).

The protein belongs to the RapZ-like family.

In terms of biological role, displays ATPase and GTPase activities. In Acetivibrio thermocellus (strain ATCC 27405 / DSM 1237 / JCM 9322 / NBRC 103400 / NCIMB 10682 / NRRL B-4536 / VPI 7372) (Clostridium thermocellum), this protein is Nucleotide-binding protein Cthe_0113.